We begin with the raw amino-acid sequence, 200 residues long: Large ribosomal subunit protein uL4 (200 aa).

The disordered stretch occupies residues G38–T72.

This sequence belongs to the universal ribosomal protein uL4 family. As to quaternary structure, part of the 50S ribosomal subunit.

One of the primary rRNA binding proteins, this protein initially binds near the 5'-end of the 23S rRNA. It is important during the early stages of 50S assembly. It makes multiple contacts with different domains of the 23S rRNA in the assembled 50S subunit and ribosome. Functionally, forms part of the polypeptide exit tunnel. This chain is Large ribosomal subunit protein uL4, found in Pseudomonas putida (strain ATCC 700007 / DSM 6899 / JCM 31910 / BCRC 17059 / LMG 24140 / F1).